We begin with the raw amino-acid sequence, 86 residues long: Large ribosomal subunit protein eL20 (86 aa).

It belongs to the eukaryotic ribosomal protein eL20 family. As to quaternary structure, part of the 50S ribosomal subunit. Binds 23S rRNA.

The chain is Large ribosomal subunit protein eL20 from Sulfolobus acidocaldarius (strain ATCC 33909 / DSM 639 / JCM 8929 / NBRC 15157 / NCIMB 11770).